A 135-amino-acid polypeptide reads, in one-letter code: P2Y purinoceptor 4 (135 aa).

The chain crosses the membrane as a helical span at residues 1–25 (VHFSSSVMVLLFGLPFLVTLVCYGL). Topologically, residues 26 to 49 (MALRLCRPLPGAGQSSSRLRSLRT) are cytoplasmic. Residues 50–72 (IAVVMTVFAVCLVPFHITRTIYY) traverse the membrane as a helical segment. Over 73-90 (LARLLKADCQILNIVNVV) the chain is Extracellular. The helical transmembrane segment at 91–112 (YKVTRPLASANSCLDPLLYLFT) threads the bilayer. Residues 113 to 135 (GDKYRHQLQRLCRVSAPQRRITA) are Cytoplasmic-facing.

This sequence belongs to the G-protein coupled receptor 1 family. As to expression, expressed in brain, heart, stria vascularis and vestibular labyrinth.

The protein localises to the cell membrane. Its function is as follows. Receptor for ATP and UTP coupled to G-proteins that activate a phosphatidylinositol-calcium second messenger system. Not activated by UDP. The protein is P2Y purinoceptor 4 (P2RY4) of Meriones unguiculatus (Mongolian jird).